A 137-amino-acid polypeptide reads, in one-letter code: Large ribosomal subunit protein uL16 (137 aa).

This sequence belongs to the universal ribosomal protein uL16 family. Part of the 50S ribosomal subunit.

In terms of biological role, binds 23S rRNA and is also seen to make contacts with the A and possibly P site tRNAs. In Mycoplasma capricolum subsp. capricolum (strain California kid / ATCC 27343 / NCTC 10154), this protein is Large ribosomal subunit protein uL16.